A 247-amino-acid polypeptide reads, in one-letter code: 3-deoxy-manno-octulosonate cytidylyltransferase (247 aa).

It belongs to the KdsB family.

The protein resides in the cytoplasm. The catalysed reaction is 3-deoxy-alpha-D-manno-oct-2-ulosonate + CTP = CMP-3-deoxy-beta-D-manno-octulosonate + diphosphate. It functions in the pathway nucleotide-sugar biosynthesis; CMP-3-deoxy-D-manno-octulosonate biosynthesis; CMP-3-deoxy-D-manno-octulosonate from 3-deoxy-D-manno-octulosonate and CTP: step 1/1. The protein operates within bacterial outer membrane biogenesis; lipopolysaccharide biosynthesis. In terms of biological role, activates KDO (a required 8-carbon sugar) for incorporation into bacterial lipopolysaccharide in Gram-negative bacteria. In Rhodopseudomonas palustris (strain BisA53), this protein is 3-deoxy-manno-octulosonate cytidylyltransferase.